The primary structure comprises 250 residues: Probable septum site-determining protein MinC (250 aa).

The disordered stretch occupies residues 110-143; sequence SGARERPLEPEPEVVKKPEPAPAPPPPPEPEVRP. The segment covering 112 to 128 has biased composition (basic and acidic residues); it reads ARERPLEPEPEVVKKPE. Over residues 129-138 the composition is skewed to pro residues; the sequence is PAPAPPPPPE.

It belongs to the MinC family. Interacts with MinD and FtsZ.

Its function is as follows. Cell division inhibitor that blocks the formation of polar Z ring septums. Rapidly oscillates between the poles of the cell to destabilize FtsZ filaments that have formed before they mature into polar Z rings. Prevents FtsZ polymerization. The chain is Probable septum site-determining protein MinC from Pseudomonas putida (strain ATCC 47054 / DSM 6125 / CFBP 8728 / NCIMB 11950 / KT2440).